The following is a 293-amino-acid chain: Ethanolamine ammonia-lyase small subunit (293 aa).

Residues Val-207 and Glu-228 each contribute to the adenosylcob(III)alamin site.

The protein belongs to the EutC family. The basic unit is a heterodimer which dimerizes to form tetramers. The heterotetramers trimerize; 6 large subunits form a core ring with 6 small subunits projecting outwards. Adenosylcob(III)alamin serves as cofactor.

Its subcellular location is the bacterial microcompartment. The enzyme catalyses ethanolamine = acetaldehyde + NH4(+). The protein operates within amine and polyamine degradation; ethanolamine degradation. In terms of biological role, catalyzes the deamination of various vicinal amino-alcohols to oxo compounds. Allows this organism to utilize ethanolamine as the sole source of nitrogen and carbon in the presence of external vitamin B12. The chain is Ethanolamine ammonia-lyase small subunit from Listeria monocytogenes serotype 4a (strain HCC23).